The following is a 369-amino-acid chain: Chorismate synthase (369 aa).

Residues R48 and R54 each coordinate NADP(+). FMN-binding positions include 125–127, 238–239, G278, 293–297, and R319; these read RSS, NA, and KPTSS.

It belongs to the chorismate synthase family. As to quaternary structure, homotetramer. FMNH2 serves as cofactor.

The enzyme catalyses 5-O-(1-carboxyvinyl)-3-phosphoshikimate = chorismate + phosphate. Its pathway is metabolic intermediate biosynthesis; chorismate biosynthesis; chorismate from D-erythrose 4-phosphate and phosphoenolpyruvate: step 7/7. Functionally, catalyzes the anti-1,4-elimination of the C-3 phosphate and the C-6 proR hydrogen from 5-enolpyruvylshikimate-3-phosphate (EPSP) to yield chorismate, which is the branch point compound that serves as the starting substrate for the three terminal pathways of aromatic amino acid biosynthesis. This reaction introduces a second double bond into the aromatic ring system. This chain is Chorismate synthase, found in Cupriavidus metallidurans (strain ATCC 43123 / DSM 2839 / NBRC 102507 / CH34) (Ralstonia metallidurans).